The primary structure comprises 632 residues: MPASLPGQDGGGTRTTRPRSQLRAACDSCNKSKTKCPGGNPCPLCQCSGIRCHYSVAHQLGRPKGSKNKRTLMREMQGSLGNGDASGQFQPNRIVTTAQAHISSNPSPVGSQSQQQQHPQQAGQQQQQQQQQQQQQHQQQQQQQQQQQQQQQQQQQQQQQQQQQQQQHQQQQQQQQQQQHLLPHAFSNTMQNAGTTAAYAGAEKEDSPLAMDDGELFSMLDQTLLMDTMTDEMSDFGQLVPQALPHPMTMPESLTSLLNHDTAFDATQLSNEYSTSSNSKPSTTDDSCMALPTPDSSTTHRPSSSVFGDGHITFSSGTASASRTSASSIVEQQSIPTSPVTVAPMSPAKSSSVPRTLPPATVTPTCTCLPGLVTLICQLEDLRHPPPPRHTSGQHPHQHPASPYSLKCILQGVQLAEEPWAGFARCLDAAGARKRHGAQENTVQDDDGNDHHRHALALYAMSIRIILSSIHKYRIALSMTGQQQRQHNFGDSPEDLDDAASVLVSVGGVQLAGETKSEMIKIAVRLALKQTTAALMRLLECRNRSSSAPSSATMQVAEYSVGHGRFESTAMVRDHPLPHSMSYSSLKTLAGPHTNMITGQDQLEKRENVAGMLSILQYTTKDLIDGANFDWR.

Positions 26-52 (CDSCNKSKTKCPGGNPCPLCQCSGIRC) form a DNA-binding region, zn(2)-C6 fungal-type. Residues 101 to 111 (HISSNPSPVGS) are compositionally biased toward polar residues. Disordered stretches follow at residues 101 to 129 (HISSNPSPVGSQSQQQQHPQQAGQQQQQQ), 270 to 311 (SNEY…GDGH), and 324 to 356 (TSASSIVEQQSIPTSPVTVAPMSPAKSSSVPRT). Residues 112–129 (QSQQQQHPQQAGQQQQQQ) are compositionally biased toward low complexity. Composition is skewed to polar residues over residues 270–286 (SNEYSTSSNSKPSTTDD), 294–306 (PDSSTTHRPSSSV), and 329–340 (IVEQQSIPTSPV).

Its subcellular location is the nucleus. In terms of biological role, transcription factor; part of the gene cluster that mediates the biosynthesis of xenovulene A, an unusual meroterpenoid that has potent inhibitory effects on the human gamma-aminobutyrate A (GABAA) benzodiazepine receptor. In Sarocladium schorii (Acremonium strictum (strain IMI 501407)), this protein is Transcription factor asR4.